Consider the following 332-residue polypeptide: MLDEHFCDCIGEFLETSFHCILYIRGVYPSCLFSKSIKYDIPVPISRSDLLTRYISNSIDSLKPHFLKDTIEKISLTILNKYDKPIEKFIFEISSLNNTTNNKNKNNNNNNNNSDDDETFNYYINIQKQNYTSNNNNNNNNNINNNNNKPNLLQLEASFKAYIIKILMTTDSFYSEQNFYKTQQSSSSSSSLKTSGGGDGNGFISNSDGVIHFNEIDNETYQQIKSNQKNKKEDNDDNNNGDKDLKFTIHVHTKPTTSNIGLNTNLSNVILNINPLESPRRTNTTINQITPVWISTTEKDSEIENSYIIPLNSNITDGKTTIRTFTEQSITK.

Residues E4–K332 form the HORMA domain. Disordered stretches follow at residues K181–I204 and K225–D244. Residues N230–D244 show a composition bias toward basic and acidic residues.

This sequence belongs to the MAD2 family.

It is found in the nucleus. Adapter protein able to interact with different proteins and involved in different biological processes. This is Mitotic spindle assembly checkpoint protein MAD2B (mad2l2) from Dictyostelium discoideum (Social amoeba).